We begin with the raw amino-acid sequence, 224 residues long: 3-dehydroquinate dehydratase (224 aa).

3-dehydroquinate is bound by residues 35–37 and Arg65; that span reads EFR. The active-site Proton donor/acceptor is His120. Lys146 serves as the catalytic Schiff-base intermediate with substrate. Positions 183, 202, and 206 each coordinate 3-dehydroquinate.

This sequence belongs to the type-I 3-dehydroquinase family. Homodimer.

The catalysed reaction is 3-dehydroquinate = 3-dehydroshikimate + H2O. It functions in the pathway metabolic intermediate biosynthesis; chorismate biosynthesis; chorismate from D-erythrose 4-phosphate and phosphoenolpyruvate: step 3/7. Functionally, involved in the third step of the chorismate pathway, which leads to the biosynthesis of aromatic amino acids. Catalyzes the cis-dehydration of 3-dehydroquinate (DHQ) and introduces the first double bond of the aromatic ring to yield 3-dehydroshikimate. The protein is 3-dehydroquinate dehydratase of Methanobrevibacter smithii (strain ATCC 35061 / DSM 861 / OCM 144 / PS).